The primary structure comprises 571 residues: Fumarate reductase (cytochrome) (571 aa).

Heme c is bound by residues histidine 8, cysteine 14, cysteine 17, histidine 18, cysteine 36, cysteine 39, histidine 40, histidine 52, histidine 58, histidine 61, cysteine 68, cysteine 71, histidine 72, alanine 74, histidine 75, cysteine 82, cysteine 85, histidine 86, asparagine 91, and tyrosine 94. The interval 118 to 571 is flavoprotein-like; the sequence is ALASAPHDTV…EEAAKYSKKN (454 aa). Positions 137, 156, 164, 165, 169, 170, 171, 278, and 338 each coordinate FAD. Glycine 170 is a succinate binding site. Positions 365, 377, and 378 each coordinate succinate. Fumarate contacts are provided by threonine 377, glutamate 378, and arginine 402. Arginine 402 serves as the catalytic Proton donor. Position 431 (lysine 431) interacts with heme c. Residue histidine 504 participates in succinate binding. Histidine 504 is a fumarate binding site. 2 residues coordinate FAD: histidine 505 and glutamate 534. Succinate-binding residues include arginine 544 and glycine 547. Residues arginine 544 and glycine 547 each contribute to the fumarate site. FAD-binding residues include alanine 549 and isoleucine 550.

Monomer. Requires FAD as cofactor. It depends on heme c as a cofactor.

The protein resides in the periplasm. The enzyme catalyses 2 Fe(III)-[cytochrome c] + succinate = fumarate + 2 Fe(II)-[cytochrome c] + 2 H(+). In terms of biological role, flavocytochrome that catalyzes the reduction of fumarate to succinate. Is essential for fumarate respiration during anaerobic growth, acting as the terminal reductase. Receives electrons from the membrane-bound tetraheme c-type cytochrome CymA. In vitro, can use the artificial electron donor methyl viologen. The protein is Fumarate reductase (cytochrome) (fccA) of Shewanella frigidimarina.